The primary structure comprises 416 residues: Serine hydroxymethyltransferase (416 aa).

(6S)-5,6,7,8-tetrahydrofolate-binding positions include L121 and 125 to 127; that span reads GHL. N6-(pyridoxal phosphate)lysine is present on K229.

The protein belongs to the SHMT family. As to quaternary structure, homodimer. The cofactor is pyridoxal 5'-phosphate.

Its subcellular location is the cytoplasm. It catalyses the reaction (6R)-5,10-methylene-5,6,7,8-tetrahydrofolate + glycine + H2O = (6S)-5,6,7,8-tetrahydrofolate + L-serine. It functions in the pathway one-carbon metabolism; tetrahydrofolate interconversion. It participates in amino-acid biosynthesis; glycine biosynthesis; glycine from L-serine: step 1/1. Catalyzes the reversible interconversion of serine and glycine with tetrahydrofolate (THF) serving as the one-carbon carrier. This reaction serves as the major source of one-carbon groups required for the biosynthesis of purines, thymidylate, methionine, and other important biomolecules. Also exhibits THF-independent aldolase activity toward beta-hydroxyamino acids, producing glycine and aldehydes, via a retro-aldol mechanism. The sequence is that of Serine hydroxymethyltransferase from Neisseria gonorrhoeae (strain ATCC 700825 / FA 1090).